The primary structure comprises 170 residues: Probable inosine/xanthosine triphosphatase (170 aa).

E31 serves as a coordination point for Mg(2+).

The protein belongs to the YjjX NTPase family. As to quaternary structure, homodimer. The cofactor is Mg(2+). Mn(2+) serves as cofactor.

It carries out the reaction XTP + H2O = XDP + phosphate + H(+). The enzyme catalyses ITP + H2O = IDP + phosphate + H(+). Phosphatase that hydrolyzes non-canonical purine nucleotides such as XTP and ITP to their respective diphosphate derivatives. Probably excludes non-canonical purines from DNA/RNA precursor pool, thus preventing their incorporation into DNA/RNA and avoiding chromosomal lesions. The chain is Probable inosine/xanthosine triphosphatase from Oceanobacillus iheyensis (strain DSM 14371 / CIP 107618 / JCM 11309 / KCTC 3954 / HTE831).